Here is a 203-residue protein sequence, read N- to C-terminus: Orotate phosphoribosyltransferase (203 aa).

Residues Arg-94, Lys-98, His-100, and 120 to 128 (EDLISTGGS) contribute to the 5-phospho-alpha-D-ribose 1-diphosphate site. Residue Ser-124 coordinates orotate.

The protein belongs to the purine/pyrimidine phosphoribosyltransferase family. PyrE subfamily. Homodimer. The cofactor is Mg(2+).

The catalysed reaction is orotidine 5'-phosphate + diphosphate = orotate + 5-phospho-alpha-D-ribose 1-diphosphate. Its pathway is pyrimidine metabolism; UMP biosynthesis via de novo pathway; UMP from orotate: step 1/2. Catalyzes the transfer of a ribosyl phosphate group from 5-phosphoribose 1-diphosphate to orotate, leading to the formation of orotidine monophosphate (OMP). The protein is Orotate phosphoribosyltransferase of Staphylococcus epidermidis (strain ATCC 35984 / DSM 28319 / BCRC 17069 / CCUG 31568 / BM 3577 / RP62A).